A 614-amino-acid polypeptide reads, in one-letter code: Probable indole-3-acetic acid-amido synthetase GH3.2 (614 aa).

The protein belongs to the IAA-amido conjugating enzyme family. In terms of tissue distribution, expressed in roots, flowers and callus.

May catalyze the synthesis of indole-3-acetic acid (IAA)-amino acid conjugates, providing a mechanism for the plant to cope with the presence of excess auxin. This Oryza sativa subsp. japonica (Rice) protein is Probable indole-3-acetic acid-amido synthetase GH3.2 (GH3.2).